A 306-amino-acid polypeptide reads, in one-letter code: Serine/threonine-protein phosphatase PP2A-2 catalytic subunit (306 aa).

The Mn(2+) site is built by D54, H56, D82, and N114. H115 acts as the Proton donor in catalysis. Residues H164 and H238 each coordinate Mn(2+). Residue L306 is modified to Leucine methyl ester.

Belongs to the PPP phosphatase family. PP-2A subfamily. In terms of assembly, PP2A consists of a common heterodimeric core enzyme, composed of a 36 kDa catalytic subunit (subunit C) and a 65 kDa constant regulatory subunit (subunit A), that associates with a variety of regulatory subunits such as subunits B (the R2/B/PR55/B55, R3/B''/PR72/PR130/PR59 and R5/B'/B56 families). Interacts with B'THETA. Interacts with HDA14. Interacts with SRK2E/OST1. Interacts with TAP46. The cofactor is Mn(2+). In terms of processing, reversibly methyl esterified on Leu-306 by leucine carboxyl methyltransferase 1 (LCMT1) and pectin methylesterase 1 (PME1). Carboxyl methylation influences the affinity of the catalytic subunit for the different regulatory subunits, thereby modulating the PP2A holoenzyme's substrate specificity, enzyme activity and cellular localization. Post-translationally, phosphorylation of either threonine (by autophosphorylation-activated protein kinase) or tyrosine results in inactivation of the phosphatase. Auto-dephosphorylation has been suggested as a mechanism for reactivation. As to expression, expressed in root meristem, emerging lateral roots, leaf vasculature, stipules, guard cells, anthers and pollen grains.

The protein resides in the cytoplasm. Its subcellular location is the cytosol. It localises to the nucleus. It is found in the peroxisome. It carries out the reaction O-phospho-L-seryl-[protein] + H2O = L-seryl-[protein] + phosphate. The enzyme catalyses O-phospho-L-threonyl-[protein] + H2O = L-threonyl-[protein] + phosphate. In terms of biological role, dephosphorylates and activates the actin-depolymerizing factor ADF1, which, in turn, regulates actin cytoskeleton remodeling and is involved in the blue light photoreceptor PHOT2-mediated chloroplast avoidance movements. Associates with the serine/threonine-protein phosphatase PP2A regulatory subunits A and B' to positively regulates beta-oxidation of fatty acids and protoauxins in peroxisomes by dephosphorylating peroxisomal beta-oxidation-related proteins. Acts as a negative regulator of abscisic acid (ABA) signaling. May regulate ABA-dependent gene expression. Involved in the light-dependent activation of nitrate reductase. The sequence is that of Serine/threonine-protein phosphatase PP2A-2 catalytic subunit from Arabidopsis thaliana (Mouse-ear cress).